The chain runs to 351 residues: Holliday junction branch migration complex subunit RuvB (351 aa).

The interval H4–Y185 is large ATPase domain (RuvB-L). ATP is bound by residues L24, R25, G66, K69, T70, T71, E132–F134, R175, Y185, and R222. T70 contributes to the Mg(2+) binding site. Residues S186–E256 form a small ATPAse domain (RuvB-S) region. Positions D259–P351 are head domain (RuvB-H). DNA-binding residues include R314 and R319.

This sequence belongs to the RuvB family. As to quaternary structure, homohexamer. Forms an RuvA(8)-RuvB(12)-Holliday junction (HJ) complex. HJ DNA is sandwiched between 2 RuvA tetramers; dsDNA enters through RuvA and exits via RuvB. An RuvB hexamer assembles on each DNA strand where it exits the tetramer. Each RuvB hexamer is contacted by two RuvA subunits (via domain III) on 2 adjacent RuvB subunits; this complex drives branch migration. In the full resolvosome a probable DNA-RuvA(4)-RuvB(12)-RuvC(2) complex forms which resolves the HJ.

It is found in the cytoplasm. It catalyses the reaction ATP + H2O = ADP + phosphate + H(+). Its function is as follows. The RuvA-RuvB-RuvC complex processes Holliday junction (HJ) DNA during genetic recombination and DNA repair, while the RuvA-RuvB complex plays an important role in the rescue of blocked DNA replication forks via replication fork reversal (RFR). RuvA specifically binds to HJ cruciform DNA, conferring on it an open structure. The RuvB hexamer acts as an ATP-dependent pump, pulling dsDNA into and through the RuvAB complex. RuvB forms 2 homohexamers on either side of HJ DNA bound by 1 or 2 RuvA tetramers; 4 subunits per hexamer contact DNA at a time. Coordinated motions by a converter formed by DNA-disengaged RuvB subunits stimulates ATP hydrolysis and nucleotide exchange. Immobilization of the converter enables RuvB to convert the ATP-contained energy into a lever motion, pulling 2 nucleotides of DNA out of the RuvA tetramer per ATP hydrolyzed, thus driving DNA branch migration. The RuvB motors rotate together with the DNA substrate, which together with the progressing nucleotide cycle form the mechanistic basis for DNA recombination by continuous HJ branch migration. Branch migration allows RuvC to scan DNA until it finds its consensus sequence, where it cleaves and resolves cruciform DNA. The sequence is that of Holliday junction branch migration complex subunit RuvB from Thermobifida fusca (strain YX).